A 212-amino-acid polypeptide reads, in one-letter code: uncharacterized protein (212 aa).

The disordered stretch occupies residues 97–151; the sequence is SDASEAKNDDRRSDGRFALYSVSDTPETTTASRSADRSTNPKTAKHPKSAAKPTV. Basic and acidic residues predominate over residues 100–111; that stretch reads SEAKNDDRRSDG.

This is an uncharacterized protein from Mycobacterium tuberculosis (strain CDC 1551 / Oshkosh).